The primary structure comprises 134 residues: Small ribosomal subunit protein uS8c (134 aa).

Belongs to the universal ribosomal protein uS8 family. As to quaternary structure, part of the 30S ribosomal subunit.

The protein resides in the plastid. The protein localises to the chloroplast. In terms of biological role, one of the primary rRNA binding proteins, it binds directly to 16S rRNA central domain where it helps coordinate assembly of the platform of the 30S subunit. This Bigelowiella natans (Pedinomonas minutissima) protein is Small ribosomal subunit protein uS8c (rps8).